A 421-amino-acid chain; its full sequence is UDP-N-acetylglucosamine 1-carboxyvinyltransferase (421 aa).

A phosphoenolpyruvate-binding site is contributed by 22–23 (KN). Residue Arg94 participates in UDP-N-acetyl-alpha-D-glucosamine binding. Residue Cys118 is the Proton donor of the active site. At Cys118 the chain carries 2-(S-cysteinyl)pyruvic acid O-phosphothioketal. Residues 123–127 (RPMDL), Asp308, and Ile330 each bind UDP-N-acetyl-alpha-D-glucosamine.

The protein belongs to the EPSP synthase family. MurA subfamily.

Its subcellular location is the cytoplasm. It catalyses the reaction phosphoenolpyruvate + UDP-N-acetyl-alpha-D-glucosamine = UDP-N-acetyl-3-O-(1-carboxyvinyl)-alpha-D-glucosamine + phosphate. It participates in cell wall biogenesis; peptidoglycan biosynthesis. Cell wall formation. Adds enolpyruvyl to UDP-N-acetylglucosamine. The sequence is that of UDP-N-acetylglucosamine 1-carboxyvinyltransferase from Ruegeria pomeroyi (strain ATCC 700808 / DSM 15171 / DSS-3) (Silicibacter pomeroyi).